The sequence spans 352 residues: Photosystem II D2 protein (352 aa).

A helical membrane pass occupies residues 40–60 (TAYLALGGWLTGTTFVTSWYT). H117 lines the chlorophyll a pocket. The chain crosses the membrane as a helical span at residues 124–140 (GFMLRQFEIARLVGIRP). Residues Q129 and N142 each contribute to the pheophytin a site. The helical transmembrane segment at 152–165 (VFVSVFLIYPLGQS) threads the bilayer. A chlorophyll a-binding site is contributed by H197. A helical transmembrane segment spans residues 207 to 227 (GALLCAIHGATVENTLFEDGE). H214 and F261 together coordinate a plastoquinone. H214 serves as a coordination point for Fe cation. H268 contributes to the Fe cation binding site. A helical membrane pass occupies residues 278 to 294 (GLWTSSIGIIGLALNLR).

This sequence belongs to the reaction center PufL/M/PsbA/D family. In terms of assembly, PSII is composed of 1 copy each of membrane proteins PsbA, PsbB, PsbC, PsbD, PsbE, PsbF, PsbH, PsbI, PsbJ, PsbK, PsbL, PsbM, PsbT, PsbX, PsbY, PsbZ, Psb30/Ycf12, at least 3 peripheral proteins of the oxygen-evolving complex and a large number of cofactors. It forms dimeric complexes. The D1/D2 heterodimer binds P680, chlorophylls that are the primary electron donor of PSII, and subsequent electron acceptors. It shares a non-heme iron and each subunit binds pheophytin, quinone, additional chlorophylls, carotenoids and lipids. There is also a Cl(-1) ion associated with D1 and D2, which is required for oxygen evolution. The PSII complex binds additional chlorophylls, carotenoids and specific lipids. is required as a cofactor.

It is found in the plastid. It localises to the organellar chromatophore thylakoid membrane. The enzyme catalyses 2 a plastoquinone + 4 hnu + 2 H2O = 2 a plastoquinol + O2. Functionally, photosystem II (PSII) is a light-driven water:plastoquinone oxidoreductase that uses light energy to abstract electrons from H(2)O, generating O(2) and a proton gradient subsequently used for ATP formation. It consists of a core antenna complex that captures photons, and an electron transfer chain that converts photonic excitation into a charge separation. The D1/D2 (PsbA/PsbD) reaction center heterodimer binds P680, the primary electron donor of PSII as well as several subsequent electron acceptors. D2 is needed for assembly of a stable PSII complex. This is Photosystem II D2 protein from Paulinella chromatophora.